Reading from the N-terminus, the 697-residue chain is MACEIMPLQSSQEDERPMSPFYLSSAHVSQVSSVSSTGELLERTIRSAVEQHLFDVNSSGGQSSEDSESGASSSSSTSTKQRRRQAKEQDESRHSRDVGRLNKENIPSGFSNLDECMLNACEVEKLYENTSGYIGERGKPKRQKSSSRLSELNENQDGLVNMENLNPTPSHERTGSDHVELISDGSKENEKDGRQSQHLENPTMKIQEHPSLPDSKLQRTPDADDQQESFVSEVPELDLTALCDQKSWEEPIPAFSSWQQESVDADEARLSPQAGRLIRQLLEEDSDPMLSPRFYAYGQSRQYLDDTEMPPSPPNSHPFMRRRSSSLGSYEDEQEDLTPAQLTRRIQSLKKKIRKFEDRFEEERKYRPSHSDKAANPEVLKWTNDLAKFRKQLKESKLKISEEDLPPRMRQRSNTLPKSFGSQLEKEDEKKQELVDKAIKPSVEATLESIQRKLQEKRAETSRPEDIKDMTKDQIANEKVALQKALLYYESIHGRPVSKNERQVMKPLYDRYRLVKQILSRASTIPIIGSPSSKRRSPLLQPIIEGETASFFKEIKEEEEGSEDDNYTKPDFMVTLKTDFSARCFLDQFEDDADGFISPMDDKIPSKCSQDTGLSNLHAASIPELLEHLQEMREEKKRIRKKLRDFEDNFFRQNGRNVQKEDRTPMAEEYNEYKHIKAKLRLLEVLISKRDTDSKSM.

3 disordered regions span residues 1 to 21, 52 to 112, and 133 to 229; these read MACE…MSPF, HLFD…GFSN, and YIGE…QQES. At Ser19 the chain carries Phosphoserine. Residues 58-78 are compositionally biased toward low complexity; that stretch reads SSGGQSSEDSESGASSSSSTS. The segment covering 86 to 103 has biased composition (basic and acidic residues); the sequence is AKEQDESRHSRDVGRLNK. Over residues 146 to 169 the composition is skewed to polar residues; the sequence is SSRLSELNENQDGLVNMENLNPTP. Residues 170-197 are compositionally biased toward basic and acidic residues; that stretch reads SHERTGSDHVELISDGSKENEKDGRQSQ. Phosphoserine is present on residues Ser271 and Ser291. Disordered stretches follow at residues 307 to 338 and 398 to 433; these read TEMP…EDLT and LKIS…KKQE. Positions 398-407 are enriched in basic and acidic residues; that stretch reads LKISEEDLPP. Ser401 is subject to Phosphoserine. Positions 412–422 are enriched in polar residues; it reads RSNTLPKSFGS. Residues 424-433 are compositionally biased toward basic and acidic residues; sequence LEKEDEKKQE.

The protein belongs to the FAM13 family.

The chain is Protein FAM13A (FAM13A) from Bos taurus (Bovine).